Here is a 278-residue protein sequence, read N- to C-terminus: MADS-box transcription factor PHERES 2 (278 aa).

One can recognise an MADS-box domain in the interval 1–60 (MKRKMKLSLIENSVSRKTTFTKRKKGMTKKLTELVTLCGVEACAVVYSPFNSIPEAWPSR).

In terms of assembly, interacts with AGL61/DIANA and AGL62. Male gametophyte, embryo and endosperm.

The protein localises to the nucleus. In terms of biological role, probable transcription factor involved in the development of gametophytes and seeds. The protein is MADS-box transcription factor PHERES 2 (PHE2) of Arabidopsis thaliana (Mouse-ear cress).